A 95-amino-acid polypeptide reads, in one-letter code: 6 kDa early secretory antigenic target homolog (95 aa).

The protein belongs to the WXG100 family. ESAT-6 subfamily. In terms of assembly, forms a tight 1:1 complex with EsxB.

It localises to the secreted. Its function is as follows. A secreted protein that might play a role in virulence. The chain is 6 kDa early secretory antigenic target homolog (esxA) from Mycobacterium leprae (strain TN).